The chain runs to 618 residues: 1-deoxy-D-xylulose-5-phosphate synthase (618 aa).

Thiamine diphosphate contacts are provided by residues His75 and 116-118 (GHS). Asp147 contacts Mg(2+). Residues 148–149 (GA), Asn176, Tyr283, and Glu364 contribute to the thiamine diphosphate site. Position 176 (Asn176) interacts with Mg(2+).

This sequence belongs to the transketolase family. DXPS subfamily. As to quaternary structure, homodimer. Mg(2+) is required as a cofactor. Thiamine diphosphate serves as cofactor.

The enzyme catalyses D-glyceraldehyde 3-phosphate + pyruvate + H(+) = 1-deoxy-D-xylulose 5-phosphate + CO2. Its pathway is metabolic intermediate biosynthesis; 1-deoxy-D-xylulose 5-phosphate biosynthesis; 1-deoxy-D-xylulose 5-phosphate from D-glyceraldehyde 3-phosphate and pyruvate: step 1/1. Catalyzes the acyloin condensation reaction between C atoms 2 and 3 of pyruvate and glyceraldehyde 3-phosphate to yield 1-deoxy-D-xylulose-5-phosphate (DXP). This is 1-deoxy-D-xylulose-5-phosphate synthase from Thiobacillus denitrificans (strain ATCC 25259 / T1).